The following is a 308-amino-acid chain: Mu-like prophage FluMu major head subunit (308 aa).

It to phage Mu protein T.

The chain is Mu-like prophage FluMu major head subunit from Haemophilus influenzae (strain ATCC 51907 / DSM 11121 / KW20 / Rd).